Reading from the N-terminus, the 129-residue chain is Small ribosomal subunit protein uS11 (129 aa).

It belongs to the universal ribosomal protein uS11 family. Part of the 30S ribosomal subunit. Interacts with proteins S7 and S18. Binds to IF-3.

Functionally, located on the platform of the 30S subunit, it bridges several disparate RNA helices of the 16S rRNA. Forms part of the Shine-Dalgarno cleft in the 70S ribosome. The polypeptide is Small ribosomal subunit protein uS11 (Stenotrophomonas maltophilia (strain R551-3)).